The primary structure comprises 449 residues: uncharacterized protein (449 aa).

The segment covering 1–11 (MLDAPEQDPVD) has biased composition (acidic residues). Positions 1–33 (MLDAPEQDPVDPGDPASPPHGEAEQPLPGPRWP) are disordered. The chain crosses the membrane as a helical span at residues 45-65 (LLLTALGGLLIAGLVTAIPAV). The tract at residues 349–449 (QPPVPPPDIP…PGPAEPAPAG (101 aa)) is disordered. A compositionally biased stretch (pro residues) spans 365-387 (PPIPLQLPTPRPAPPAQQLPSTP). The segment covering 409 to 418 (HAPASAAPAE) has biased composition (low complexity). Pro residues predominate over residues 437–449 (ATPPGPAEPAPAG).

Its subcellular location is the cell membrane. It localises to the secreted. May play a role in septum formation. This is an uncharacterized protein from Mycobacterium tuberculosis (strain CDC 1551 / Oshkosh).